A 336-amino-acid chain; its full sequence is Biotin synthase (336 aa).

In terms of domain architecture, Radical SAM core spans 54–281; that stretch reads QAIQLSTLLS…KSYVRLSAGR (228 aa). Positions 69, 73, and 76 each coordinate [4Fe-4S] cluster. Residues cysteine 113, cysteine 144, cysteine 204, and arginine 276 each coordinate [2Fe-2S] cluster.

This sequence belongs to the radical SAM superfamily. Biotin synthase family. As to quaternary structure, homodimer. The cofactor is [4Fe-4S] cluster. [2Fe-2S] cluster is required as a cofactor.

The enzyme catalyses (4R,5S)-dethiobiotin + (sulfur carrier)-SH + 2 reduced [2Fe-2S]-[ferredoxin] + 2 S-adenosyl-L-methionine = (sulfur carrier)-H + biotin + 2 5'-deoxyadenosine + 2 L-methionine + 2 oxidized [2Fe-2S]-[ferredoxin]. It participates in cofactor biosynthesis; biotin biosynthesis; biotin from 7,8-diaminononanoate: step 2/2. Functionally, catalyzes the conversion of dethiobiotin (DTB) to biotin by the insertion of a sulfur atom into dethiobiotin via a radical-based mechanism. The chain is Biotin synthase from Actinobacillus pleuropneumoniae serotype 7 (strain AP76).